The primary structure comprises 311 residues: Glutaminase (311 aa).

Substrate-binding residues include Ser-66, Asn-116, Glu-162, Asn-169, Tyr-193, Tyr-245, and Val-263.

This sequence belongs to the glutaminase family. Homotetramer.

The enzyme catalyses L-glutamine + H2O = L-glutamate + NH4(+). The protein is Glutaminase of Rhodopseudomonas palustris (strain ATCC BAA-98 / CGA009).